Reading from the N-terminus, the 632-residue chain is Putative ankyrin repeat protein L767 (632 aa).

5 ANK repeats span residues 61–97, 228–250, 251–282, 345–374, and 517–546; these read YGNT…DYEF, FDNE…YIVE, KGFY…NLTD, NLDI…NVDD, and NSIE…NDTD.

This Acanthamoeba polyphaga mimivirus (APMV) protein is Putative ankyrin repeat protein L767.